Reading from the N-terminus, the 234-residue chain is Probable chemoreceptor glutamine deamidase CheD (234 aa).

Belongs to the CheD family.

It carries out the reaction L-glutaminyl-[protein] + H2O = L-glutamyl-[protein] + NH4(+). In terms of biological role, probably deamidates glutamine residues to glutamate on methyl-accepting chemotaxis receptors (MCPs), playing an important role in chemotaxis. In Burkholderia mallei (strain NCTC 10247), this protein is Probable chemoreceptor glutamine deamidase CheD.